The sequence spans 136 residues: Nucleoside diphosphate kinase (136 aa).

Residues K10, F58, R86, T92, R104, and N114 each coordinate ATP. Catalysis depends on H117, which acts as the Pros-phosphohistidine intermediate.

It belongs to the NDK family. In terms of assembly, homotetramer. Requires Mg(2+) as cofactor.

It localises to the cytoplasm. The enzyme catalyses a 2'-deoxyribonucleoside 5'-diphosphate + ATP = a 2'-deoxyribonucleoside 5'-triphosphate + ADP. It carries out the reaction a ribonucleoside 5'-diphosphate + ATP = a ribonucleoside 5'-triphosphate + ADP. Functionally, major role in the synthesis of nucleoside triphosphates other than ATP. The ATP gamma phosphate is transferred to the NDP beta phosphate via a ping-pong mechanism, using a phosphorylated active-site intermediate. This Mycobacterium marinum (strain ATCC BAA-535 / M) protein is Nucleoside diphosphate kinase.